The sequence spans 167 residues: Protein archease (167 aa).

Ala-2 is modified (N-acetylalanine). Ca(2+) is bound by residues Asp-39, Asp-166, and Ile-167.

It belongs to the archease family. Component of the tRNA-splicing ligase complex.

Functionally, component of the tRNA-splicing ligase complex required to facilitate the enzymatic turnover of catalytic subunit RTCB. Together with DDX1, acts by facilitating the guanylylation of RTCB, a key intermediate step in tRNA ligation. In Homo sapiens (Human), this protein is Protein archease (ZBTB8OS).